A 286-amino-acid polypeptide reads, in one-letter code: ATP synthase gamma chain (286 aa).

This sequence belongs to the ATPase gamma chain family. As to quaternary structure, F-type ATPases have 2 components, CF(1) - the catalytic core - and CF(0) - the membrane proton channel. CF(1) has five subunits: alpha(3), beta(3), gamma(1), delta(1), epsilon(1). CF(0) has three main subunits: a, b and c.

Its subcellular location is the cell inner membrane. Its function is as follows. Produces ATP from ADP in the presence of a proton gradient across the membrane. The gamma chain is believed to be important in regulating ATPase activity and the flow of protons through the CF(0) complex. This Pseudomonas savastanoi pv. phaseolicola (strain 1448A / Race 6) (Pseudomonas syringae pv. phaseolicola (strain 1448A / Race 6)) protein is ATP synthase gamma chain.